A 115-amino-acid polypeptide reads, in one-letter code: Pro-neuregulin-4, membrane-bound isoform (115 aa).

The Extracellular segment spans residues 1-62; that stretch reads MPTDHEEPCG…SSIQTKSNLF (62 aa). One can recognise an EGF-like domain in the interval 5 to 46; that stretch reads HEEPCGPSHKSFCLNGGLCYVIPTIPSPFCRCVENYTGARCE. Intrachain disulfides connect Cys-9–Cys-23, Cys-17–Cys-34, and Cys-36–Cys-45. Residue Asn-39 is glycosylated (N-linked (GlcNAc...) asparagine). Residues 63–83 traverse the membrane as a helical segment; that stretch reads EAFVALAVLVTLIIGAFYFLC. Residues 84–115 are Cytoplasmic-facing; the sequence is RKGHFQRASSVQYDINLVETSSTSAHHSHEQH.

Belongs to the neuregulin family. As to quaternary structure, interacts with ERBB4. Proteolytic cleavage close to the plasma membrane on the external face leads to the release of the soluble growth factor form. In terms of processing, extensive glycosylation precedes the proteolytic cleavage.

Its subcellular location is the cell membrane. It localises to the secreted. Its function is as follows. Low affinity ligand for the ERBB4 tyrosine kinase receptor. Concomitantly recruits ERBB1 and ERBB2 coreceptors, resulting in ligand-stimulated tyrosine phosphorylation and activation of the ERBB receptors. Does not bind to the ERBB1, ERBB2 and ERBB3 receptors. This is Pro-neuregulin-4, membrane-bound isoform (NRG4) from Homo sapiens (Human).